The sequence spans 84 residues: Gomesin-like peptide (84 aa).

The N-terminal stretch at 1-23 is a signal peptide; it reads MNRTRALVCLFLAVLILAHESEA. Q24 carries the pyrrolidone carboxylic acid modification. 2 disulfides stabilise this stretch: C25–C38 and C29–C34. An Arginine amide modification is found at R41. Residues 42-84 constitute a propeptide that is removed on maturation; sequence GKRSVEEPSGGAQVVEKRAVDDADIPSAVEERELDEEESIEFR.

As to expression, expressed by the venom gland.

It is found in the secreted. Antibacterial peptide. The chain is Gomesin-like peptide from Hadronyche infensa (Fraser island funnel-web spider).